The following is a 786-amino-acid chain: DNA repair and recombination protein RAD54-like (786 aa).

The interval 2 to 9 (RRSLAPSQ) is required for chromatin remodeling, strand pairing activities and coupling of ATPase activity. Threonine 22 carries the post-translational modification Phosphothreonine. The region spanning 165 to 340 (EGKRGNFNGC…FSLVNFVNPE (176 aa)) is the Helicase ATP-binding domain. 178–185 (DEMGLGKT) is an ATP binding site. The DEGH box signature appears at 291–294 (DEGH). The Helicase C-terminal domain maps to 497–654 (LLDFMLAAIR…NNDSAEKHFT (158 aa)). Residues 740–786 (KQPTCITEDNHSEQPQLNSKRNANSVLENDDDEDFDPNSSDEKFLGF) are disordered. The span at 752–766 (EQPQLNSKRNANSVL) shows a compositional bias: polar residues.

It belongs to the SNF2/RAD54 helicase family. As to quaternary structure, interacts (via N-terminus) with spn-A/Rad51.

It is found in the nucleus. Functionally, involved in mitotic DNA repair and meiotic recombination. Functions in the recombinational DNA repair pathway. Essential for interhomolog gene conversion (GC), but may have a less important role in intersister GC than spn-A/Rad51. In the presence of DNA, spn-A/Rad51 enhances the ATPase activity of okr/Rad54. This chain is DNA repair and recombination protein RAD54-like, found in Drosophila virilis (Fruit fly).